The chain runs to 638 residues: 1-deoxy-D-xylulose-5-phosphate synthase (638 aa).

Thiamine diphosphate contacts are provided by residues His-78 and 119–121; that span reads GHS. Residue Asp-151 coordinates Mg(2+). Thiamine diphosphate-binding positions include 152–153, Asn-180, Tyr-289, and Glu-371; that span reads GA. Asn-180 lines the Mg(2+) pocket.

The protein belongs to the transketolase family. DXPS subfamily. As to quaternary structure, homodimer. The cofactor is Mg(2+). Thiamine diphosphate serves as cofactor.

It carries out the reaction D-glyceraldehyde 3-phosphate + pyruvate + H(+) = 1-deoxy-D-xylulose 5-phosphate + CO2. Its pathway is metabolic intermediate biosynthesis; 1-deoxy-D-xylulose 5-phosphate biosynthesis; 1-deoxy-D-xylulose 5-phosphate from D-glyceraldehyde 3-phosphate and pyruvate: step 1/1. Functionally, catalyzes the acyloin condensation reaction between C atoms 2 and 3 of pyruvate and glyceraldehyde 3-phosphate to yield 1-deoxy-D-xylulose-5-phosphate (DXP). This chain is 1-deoxy-D-xylulose-5-phosphate synthase, found in Bartonella bacilliformis (strain ATCC 35685 / KC583 / Herrer 020/F12,63).